The primary structure comprises 180 residues: Large ribosomal subunit protein uL6 (180 aa).

It belongs to the universal ribosomal protein uL6 family. Part of the 50S ribosomal subunit.

This protein binds to the 23S rRNA, and is important in its secondary structure. It is located near the subunit interface in the base of the L7/L12 stalk, and near the tRNA binding site of the peptidyltransferase center. The sequence is that of Large ribosomal subunit protein uL6 from Clostridium botulinum (strain ATCC 19397 / Type A).